The primary structure comprises 129 residues: Large ribosomal subunit protein uL22 (129 aa).

It belongs to the universal ribosomal protein uL22 family. Part of the 50S ribosomal subunit.

This protein binds specifically to 23S rRNA; its binding is stimulated by other ribosomal proteins, e.g. L4, L17, and L20. It is important during the early stages of 50S assembly. It makes multiple contacts with different domains of the 23S rRNA in the assembled 50S subunit and ribosome. Its function is as follows. The globular domain of the protein is located near the polypeptide exit tunnel on the outside of the subunit, while an extended beta-hairpin is found that lines the wall of the exit tunnel in the center of the 70S ribosome. This Bartonella quintana (strain Toulouse) (Rochalimaea quintana) protein is Large ribosomal subunit protein uL22.